We begin with the raw amino-acid sequence, 322 residues long: CMP-sialic acid transporter 1 (322 aa).

At 1–2 (MQ) the chain is on the cytoplasmic side. The helical transmembrane segment at 3–23 (WYLVAALLTVLTSSQGILTTL) threads the bilayer. Topologically, residues 24–33 (SQSNGKYKYD) are lumenal. The helical transmembrane segment at 34-54 (YATIPFLAELFKLSFSSFFLW) threads the bilayer. Residues 55–75 (KECQSSSPPRMTKEWRSIRLY) are Cytoplasmic-facing. The chain crosses the membrane as a helical span at residues 76 to 96 (LVPSVIYLIHNNVQFATLTYV). The Lumenal portion of the chain corresponds to 97–100 (DPST). Residues 101-120 (YQIMGNLKIVTTGILFRLVL) traverse the membrane as a helical segment. Residues 121 to 126 (KRKLSN) lie on the Cytoplasmic side of the membrane. Residues 127 to 144 (LQWMAVVLLAVGTTTSQV) form a helical membrane-spanning segment. At 145 to 157 (KGCGDAPCDSLFS) the chain is on the lumenal side. The helical transmembrane segment at 158 to 178 (APFQGYMLGILSACLSALAGV) threads the bilayer. Residues 179-198 (YTEYLMKKNNDSLYWQNVQL) are Cytoplasmic-facing. The helical transmembrane segment at 199–219 (YTFGVIFNMGWLIYGDFKAGF) threads the bilayer. The Lumenal portion of the chain corresponds to 220–233 (ERGPWWQRLFNGYS). The chain crosses the membrane as a helical span at residues 234-254 (ITTWMVVFNLGSTGLLVSWLM). Over 255–262 (KYSDNIVK) the chain is Cytoplasmic. The chain crosses the membrane as a helical span at residues 263 to 283 (VYSTSMAMLLTMVLSVYLFNV). Residues 284–286 (RAT) lie on the Lumenal side of the membrane.

This sequence belongs to the nucleotide-sugar transporter family. CMP-Sialate:CMP antiporter (TC 2.A.7.12) subfamily. As to expression, expressed in roots, leaves and stalks.

The protein resides in the golgi apparatus membrane. In terms of biological role, sugar transporter involved in the transport of CMP-sialic acid from the cytoplasm into the Golgi. May transport important nucleotide sugars such as CMP-Kdo (2-keto-3-deoxy-D-manno-octulosonic acid) in physiological conditions. The chain is CMP-sialic acid transporter 1 from Oryza sativa subsp. japonica (Rice).